The following is a 286-amino-acid chain: 4-diphosphocytidyl-2-C-methyl-D-erythritol kinase (286 aa).

The active site involves Lys-12. 96–106 is a binding site for ATP; the sequence is PHGAGLGGGSA. Asp-138 is a catalytic residue.

The protein belongs to the GHMP kinase family. IspE subfamily.

It carries out the reaction 4-CDP-2-C-methyl-D-erythritol + ATP = 4-CDP-2-C-methyl-D-erythritol 2-phosphate + ADP + H(+). It participates in isoprenoid biosynthesis; isopentenyl diphosphate biosynthesis via DXP pathway; isopentenyl diphosphate from 1-deoxy-D-xylulose 5-phosphate: step 3/6. Its function is as follows. Catalyzes the phosphorylation of the position 2 hydroxy group of 4-diphosphocytidyl-2C-methyl-D-erythritol. The polypeptide is 4-diphosphocytidyl-2-C-methyl-D-erythritol kinase (Nitratidesulfovibrio vulgaris (strain ATCC 29579 / DSM 644 / CCUG 34227 / NCIMB 8303 / VKM B-1760 / Hildenborough) (Desulfovibrio vulgaris)).